We begin with the raw amino-acid sequence, 122 residues long: Prefoldin subunit 1 (122 aa).

The protein belongs to the prefoldin subunit beta family. In terms of assembly, heterohexamer of two PFD-alpha type and four PFD-beta type subunits.

In terms of biological role, binds specifically to cytosolic chaperonin (c-CPN) and transfers target proteins to it. Binds to nascent polypeptide chain and promotes folding in an environment in which there are many competing pathways for nonnative proteins. This is Prefoldin subunit 1 (pfdn1) from Tetraodon nigroviridis (Spotted green pufferfish).